We begin with the raw amino-acid sequence, 97 residues long: uncharacterized protein (97 aa).

This is an uncharacterized protein from Escherichia coli (strain K12).